Consider the following 87-residue polypeptide: Insertion element IS407 uncharacterized 10.0 kDa protein (87 aa).

The protein belongs to the transposase 8 family.

This chain is Insertion element IS407 uncharacterized 10.0 kDa protein, found in Burkholderia multivorans (strain ATCC 17616 / 249).